The chain runs to 201 residues: Large ribosomal subunit protein uL4 (201 aa).

Residues 45–72 (AQKTRAEVTGSGKKPWRQKGTGRARAGS) are disordered.

It belongs to the universal ribosomal protein uL4 family. As to quaternary structure, part of the 50S ribosomal subunit.

Functionally, one of the primary rRNA binding proteins, this protein initially binds near the 5'-end of the 23S rRNA. It is important during the early stages of 50S assembly. It makes multiple contacts with different domains of the 23S rRNA in the assembled 50S subunit and ribosome. In terms of biological role, forms part of the polypeptide exit tunnel. This Shewanella baltica (strain OS223) protein is Large ribosomal subunit protein uL4.